We begin with the raw amino-acid sequence, 446 residues long: Chromosomal replication initiator protein DnaA (446 aa).

The domain I, interacts with DnaA modulators stretch occupies residues 1–92; that stretch reads MENISDLWNS…SQAEEEIDLP (92 aa). Residues 93–109 form a domain II region; that stretch reads PSKPNAAQDDSNHLPQS. The interval 110–326 is domain III, AAA+ region; it reads MLNPKYTFDT…GALIRVVAYS (217 aa). 4 residues coordinate ATP: G154, G156, K157, and T158. The interval 327–446 is domain IV, binds dsDNA; sequence SLINKDINAD…QVEEINDILK (120 aa).

Belongs to the DnaA family. In terms of assembly, oligomerizes as a right-handed, spiral filament on DNA at oriC.

It localises to the cytoplasm. Functionally, plays an essential role in the initiation and regulation of chromosomal replication. ATP-DnaA binds to the origin of replication (oriC) to initiate formation of the DNA replication initiation complex once per cell cycle. Binds the DnaA box (a 9 base pair repeat at the origin) and separates the double-stranded (ds)DNA. Forms a right-handed helical filament on oriC DNA; dsDNA binds to the exterior of the filament while single-stranded (ss)DNA is stabiized in the filament's interior. The ATP-DnaA-oriC complex binds and stabilizes one strand of the AT-rich DNA unwinding element (DUE), permitting loading of DNA polymerase. After initiation quickly degrades to an ADP-DnaA complex that is not apt for DNA replication. Binds acidic phospholipids. The chain is Chromosomal replication initiator protein DnaA from Bacillus cereus (strain 03BB102).